A 400-amino-acid chain; its full sequence is Lysophospholipid transporter LplT (400 aa).

Transmembrane regions (helical) follow at residues 19-39 (VIVA…ATLA), 53-73 (VLQM…GQIA), 91-111 (AGAA…LVGI), 139-159 (LMEA…GVLA), 164-184 (IAAL…NLFI), 195-213 (SWRL…VVLW), 227-247 (LFWG…PVAL), 257-277 (YLNA…AKLV), 281-301 (TVSR…IFSL), 304-324 (ALLP…FFVV), 352-372 (NSAM…GVPA), and 373-393 (VAIG…LWIW).

Belongs to the major facilitator superfamily. LplT (TC 2.A.1.42) family.

It is found in the cell inner membrane. In terms of biological role, catalyzes the facilitated diffusion of 2-acyl-glycero-3-phosphoethanolamine (2-acyl-GPE) into the cell. In Salmonella schwarzengrund (strain CVM19633), this protein is Lysophospholipid transporter LplT.